The following is a 496-amino-acid chain: 1-aminocyclopropane-1-carboxylate synthase 2 (496 aa).

Positions 55 and 93 each coordinate substrate. Lys279 bears the N6-(pyridoxal phosphate)lysine mark. 3 positions are modified to phosphoserine: Ser483, Ser488, and Ser491.

Belongs to the class-I pyridoxal-phosphate-dependent aminotransferase family. As to quaternary structure, homodimer and heterodimer. In vivo, the relevance of heterodimerization with other ACS enzymes is however unsure. Interacts with GRF3. It depends on pyridoxal 5'-phosphate as a cofactor. In terms of processing, phosphorylated on serine residue by MAP kinase (MPK6). May be processed at its C-terminus. High in developing leaves and in flowers. Expressed in roots and siliques.

The enzyme catalyses S-adenosyl-L-methionine = 1-aminocyclopropane-1-carboxylate + S-methyl-5'-thioadenosine + H(+). It functions in the pathway alkene biosynthesis; ethylene biosynthesis via S-adenosyl-L-methionine; ethylene from S-adenosyl-L-methionine: step 1/2. 1-aminocyclopropane-1-carboxylate synthase (ACS) enzymes catalyze the conversion of S-adenosyl-L-methionine (SAM) into 1-aminocyclopropane-1-carboxylate (ACC), a direct precursor of ethylene. The sequence is that of 1-aminocyclopropane-1-carboxylate synthase 2 (ACS2) from Arabidopsis thaliana (Mouse-ear cress).